The primary structure comprises 156 residues: Small ribosomal subunit protein uS7c (156 aa).

The protein belongs to the universal ribosomal protein uS7 family. As to quaternary structure, part of the 30S ribosomal subunit.

Its subcellular location is the plastid. It localises to the chloroplast. Its function is as follows. One of the primary rRNA binding proteins, it binds directly to 16S rRNA where it nucleates assembly of the head domain of the 30S subunit. This chain is Small ribosomal subunit protein uS7c (rps7), found in Chlorokybus atmophyticus (Soil alga).